The chain runs to 254 residues: Pimeloyl-[acyl-carrier protein] methyl ester esterase (254 aa).

An AB hydrolase-1 domain is found at 14–238 (VVMLHGWGLH…QASHAPFLSH (225 aa)). Substrate contacts are provided by residues Trp-20, 80-81 (SL), and 142-146 (FLALQ). The Nucleophile role is filled by Ser-80. Active-site residues include Asp-204 and His-232. Position 232 (His-232) interacts with substrate.

It belongs to the AB hydrolase superfamily. Carboxylesterase BioH family. Monomer.

It localises to the cytoplasm. The enzyme catalyses 6-carboxyhexanoyl-[ACP] methyl ester + H2O = 6-carboxyhexanoyl-[ACP] + methanol + H(+). Its pathway is cofactor biosynthesis; biotin biosynthesis. The physiological role of BioH is to remove the methyl group introduced by BioC when the pimeloyl moiety is complete. It allows to synthesize pimeloyl-ACP via the fatty acid synthetic pathway through the hydrolysis of the ester bonds of pimeloyl-ACP esters. The sequence is that of Pimeloyl-[acyl-carrier protein] methyl ester esterase from Chromobacterium violaceum (strain ATCC 12472 / DSM 30191 / JCM 1249 / CCUG 213 / NBRC 12614 / NCIMB 9131 / NCTC 9757 / MK).